We begin with the raw amino-acid sequence, 272 residues long: Low-density lipoprotein receptor class A domain-containing protein 2 (272 aa).

Residues 1 to 25 form the signal peptide; sequence MEACCLLQLPQRLLLLGAAALTATA. Residues 26–233 lie on the Extracellular side of the membrane; sequence LETADLAELC…GSTDAHTSRS (208 aa). N-linked (GlcNAc...) asparagine glycosylation occurs at N97. Positions 172-214 constitute an LDL-receptor class A domain; it reads PCGAYFRCQNGRCIPSSLVCDPWGMDNCGDGSDQGSWSPADCR. 3 disulfide bridges follow: C173/C184, C179/C199, and C191/C213. Positions 202 to 272 are disordered; the sequence is GSDQGSWSPA…QDAALEGSTE (71 aa). Over residues 220 to 236 the composition is skewed to polar residues; that stretch reads PSQTGSTDAHTSRSLTP. A helical transmembrane segment spans residues 234–250; the sequence is LTPSPALGSAGSLWIAA. At 251 to 272 the chain is on the cytoplasmic side; it reads ERSSPAGRDPTRQDAALEGSTE.

This sequence belongs to the LDLR family.

Its subcellular location is the membrane. The chain is Low-density lipoprotein receptor class A domain-containing protein 2 (LDLRAD2) from Homo sapiens (Human).